A 453-amino-acid chain; its full sequence is MYKTKCLREKLVLFLKIFFPILIYQFANYSASFVDTAMTGQYNTMDLAGVSMATSIWNPFFTFLTGIVSALVPIIGHHLGRGKKEEVASDFYQFIYLALGLSVVLLGMVLFLAPIILNHIGLEAAVAAVAVRYLWFLSIGIIPLLLFSVIRSLLDSLGLTKLSMYLMLLLLPLNSGFNYLLIYGAFGVPELGGAGAGLGTSLAYWVLLGISVLVLFKQEKLKALHLEKRIPLNMDKIKEGVRLGLPIGGTVFAEVAIFSVVGLIMAKFSPLIIASHQSAMNFSSLMYAFPMSISSAMAIVVSYEVGAKRFDDAKTYIGLGRWTALIFAAFTLTFLYIFRGNVASLYGNDPKFIDLTVRFLTYSLFFQLADTFAAPLQGILRGYKDTVIPFYLGLLGYWGVAIPVRTLFDSLTDFGAYSYWIGLIISLIVSGALYRWRLTVIMKRFESLAKSKC.

A run of 12 helical transmembrane segments spans residues 12–34 (VLFLKIFFPILIYQFANYSASFV), 54–76 (TSIWNPFFTFLTGIVSALVPIIG), 96–118 (YLALGLSVVLLGMVLFLAPIILN), 128–150 (AVAVRYLWFLSIGIIPLLLFSVI), 162–184 (LSMYLMLLLLPLNSGFNYLLIYG), 194–216 (AGAGLGTSLAYWVLLGISVLVLF), 243–265 (LGLPIGGTVFAEVAIFSVVGLIM), 285–307 (LMYAFPMSISSAMAIVVSYEVGA), 319–338 (LGRWTALIFAAFTLTFLYIF), 358–380 (RFLTYSLFFQLADTFAAPLQGIL), 387–404 (VIPFYLGLLGYWGVAIPV), and 414–436 (FGAYSYWIGLIISLIVSGALYRW).

It belongs to the multi antimicrobial extrusion (MATE) (TC 2.A.66.1) family.

The protein resides in the cell membrane. Multidrug efflux pump. The sequence is that of Probable multidrug resistance protein NorM (norM) from Streptococcus pneumoniae serotype 4 (strain ATCC BAA-334 / TIGR4).